A 166-amino-acid polypeptide reads, in one-letter code: NADH-quinone oxidoreductase subunit A (166 aa).

3 consecutive transmembrane segments (helical) span residues 16–36 (FAVF…GAYF), 68–88 (FYLV…LYAW), and 98–118 (IGFI…FYLV). The interval 141 to 166 (RYASSHPQDISQELSVAGSQQANESR) is disordered.

The protein belongs to the complex I subunit 3 family. In terms of assembly, NDH-1 is composed of 13 different subunits. Subunits NuoA, H, J, K, L, M, N constitute the membrane sector of the complex.

The protein resides in the cell inner membrane. It catalyses the reaction a quinone + NADH + 5 H(+)(in) = a quinol + NAD(+) + 4 H(+)(out). Functionally, NDH-1 shuttles electrons from NADH, via FMN and iron-sulfur (Fe-S) centers, to quinones in the respiratory chain. The immediate electron acceptor for the enzyme in this species is believed to be ubiquinone. Couples the redox reaction to proton translocation (for every two electrons transferred, four hydrogen ions are translocated across the cytoplasmic membrane), and thus conserves the redox energy in a proton gradient. This Yersinia pseudotuberculosis serotype IB (strain PB1/+) protein is NADH-quinone oxidoreductase subunit A.